We begin with the raw amino-acid sequence, 380 residues long: Protein Wnt-5a (380 aa).

A signal peptide spans 1–37; the sequence is MKKPIGILSPGVALGTAGGAMSSKFFLMALATFFSFA. Residues 38 to 61 constitute a propeptide that is removed on maturation; the sequence is QVVIEANSWWSLGMNNPVQMSEVY. A disulfide bridge links C104 with C115. 2 N-linked (GlcNAc...) asparagine glycosylation sites follow: N114 and N120. 10 disulfide bridges follow: C154/C162, C164/C182, C238/C252, C240/C247, C309/C340, C325/C335, C339/C379, C355/C370, C357/C367, and C362/C363. S244 carries O-palmitoleoyl serine; by PORCN lipidation. Residues N312 and N326 are each glycosylated (N-linked (GlcNAc...) asparagine).

It belongs to the Wnt family. Forms a soluble 1:1 complex with AFM; this prevents oligomerization and is required for prolonged biological activity. The complex with AFM may represent the physiological form in body fluids. Homooligomer; disulfide-linked, leading to inactivation. Interacts with PORCN. Interacts with WLS. Interacts with glypican GCP3. Interacts with PKD1 (via extracellular domain). Interacts with TMEM67. In terms of processing, glycosylation is necessary for secretion but not for activity. Post-translationally, palmitoleoylation is required for efficient binding to frizzled receptors. Depalmitoleoylation leads to Wnt signaling pathway inhibition. Proteolytic processing by TIKI1 and TIKI2 promotes oxidation and formation of large disulfide-bond oligomers, leading to inactivation of WNT5A. In terms of tissue distribution, expressed in a gradient at the caudal end of the embryo during gastrulation and later in the distal-most aspect of several structures that extend from the body such as the limbs and genital tubercle.

It is found in the secreted. It localises to the extracellular space. The protein resides in the extracellular matrix. Its function is as follows. Ligand for members of the frizzled family of seven transmembrane receptors. Can activate or inhibit canonical Wnt signaling, depending on receptor context. In the presence of FZD4, activates beta-catenin signaling. In the presence of ROR2, inhibits the canonical Wnt pathway by promoting beta-catenin degradation through a GSK3-independent pathway which involves down-regulation of beta-catenin-induced reporter gene expression. Suppression of the canonical pathway allows chondrogenesis to occur and inhibits tumor formation. Stimulates cell migration. Decreases proliferation, migration, invasiveness and clonogenicity of carcinoma cells and may act as a tumor suppressor. Mediates motility of melanoma cells. Required during embryogenesis for extension of the primary anterior-posterior axis and for outgrowth of limbs and the genital tubercle. Inhibits type II collagen expression in chondrocytes. The sequence is that of Protein Wnt-5a (Wnt5a) from Mus musculus (Mouse).